A 434-amino-acid polypeptide reads, in one-letter code: Probable exopolygalacturonase X (434 aa).

The signal sequence occupies residues 1-23 (MKFLHTVAQTATLLLSLGASVEG). The disordered stretch occupies residues 35 to 54 (HHPFRPLPASTPRTKTCHVR). N-linked (GlcNAc...) asparagine glycans are attached at residues asparagine 113, asparagine 129, and asparagine 199. The PbH1 1 repeat unit spans residues 231 to 252 (SSNIVIQNSVVNNGDDCVSFKP). Catalysis depends on aspartate 245, which acts as the Proton donor. The cysteines at positions 247 and 264 are disulfide-linked. 2 N-linked (GlcNAc...) asparagine glycosylation sites follow: asparagine 253 and asparagine 265. The stretch at 254 to 274 (STDILVQNMHCNGSHGISVGS) is one PbH1 2 repeat. Histidine 268 is a catalytic residue. N-linked (GlcNAc...) asparagine glycosylation is found at asparagine 292, asparagine 297, asparagine 329, asparagine 354, and asparagine 364. The PbH1 3 repeat unit spans residues 327–348 (VSNITYDRMYIENVDWAIEVTQ). The stretch at 362–394 (PSNLTISDVHIKNMWGTTSGKRDPNVGTIVCSS) is one PbH1 4 repeat. The cysteines at positions 392 and 398 are disulfide-linked. N-linked (GlcNAc...) asparagine glycosylation is found at asparagine 407 and asparagine 430.

The protein belongs to the glycosyl hydrolase 28 family.

The protein localises to the secreted. The catalysed reaction is [(1-&gt;4)-alpha-D-galacturonosyl](n) + H2O = alpha-D-galacturonate + [(1-&gt;4)-alpha-D-galacturonosyl](n-1). Functionally, specific in hydrolyzing the terminal glycosidic bond of polygalacturonic acid and oligogalacturonates. This is Probable exopolygalacturonase X (pgaX) from Aspergillus terreus (strain NIH 2624 / FGSC A1156).